A 433-amino-acid chain; its full sequence is Monodehydroascorbate reductase (433 aa).

FAD-binding positions include Gly13–Ser16, Glu40, Arg47, Lys52, Ile95, and Arg146–Glu147. Residues Gly171–Glu177, Glu195, Arg201, and Gly260 contribute to the NAD(+) site. Tyr173 to Glu177 is an NADP(+) binding site. NADP(+) contacts are provided by Arg201 and Gly260. Asp297 lines the FAD pocket. Glu313–His314 lines the NAD(+) pocket. An NADP(+)-binding site is contributed by Glu313–His314. Val315 serves as a coordination point for FAD. Arg319 contacts L-ascorbate. An FAD-binding site is contributed by Tyr348. Tyr348 provides a ligand contact to NAD(+). Tyr348 contacts NADP(+). Arg350 serves as a coordination point for L-ascorbate.

The protein belongs to the FAD-dependent oxidoreductase family. FAD serves as cofactor. In terms of tissue distribution, expressed in leaves, and to a lesser degree in stems, roots and all stages of fruit.

The protein localises to the cytoplasm. The enzyme catalyses 2 monodehydro-L-ascorbate radical + NADH + H(+) = 2 L-ascorbate + NAD(+). Functionally, catalyzes the conversion of monodehydroascorbate to ascorbate, oxidizing NADH in the process. The chain is Monodehydroascorbate reductase from Solanum lycopersicum (Tomato).